The primary structure comprises 95 residues: Aspartyl/glutamyl-tRNA(Asn/Gln) amidotransferase subunit C (95 aa).

This sequence belongs to the GatC family. As to quaternary structure, heterotrimer of A, B and C subunits.

The enzyme catalyses L-glutamyl-tRNA(Gln) + L-glutamine + ATP + H2O = L-glutaminyl-tRNA(Gln) + L-glutamate + ADP + phosphate + H(+). It carries out the reaction L-aspartyl-tRNA(Asn) + L-glutamine + ATP + H2O = L-asparaginyl-tRNA(Asn) + L-glutamate + ADP + phosphate + 2 H(+). In terms of biological role, allows the formation of correctly charged Asn-tRNA(Asn) or Gln-tRNA(Gln) through the transamidation of misacylated Asp-tRNA(Asn) or Glu-tRNA(Gln) in organisms which lack either or both of asparaginyl-tRNA or glutaminyl-tRNA synthetases. The reaction takes place in the presence of glutamine and ATP through an activated phospho-Asp-tRNA(Asn) or phospho-Glu-tRNA(Gln). In Rhizobium leguminosarum bv. trifolii (strain WSM2304), this protein is Aspartyl/glutamyl-tRNA(Asn/Gln) amidotransferase subunit C.